Consider the following 532-residue polypeptide: MTSTVAHGAGSAGPADDAEPMSARTYQVRTYGCQMNVHDSERMAGLLEAAGYRRAAEGTDADVVVFNTCAVRENADNKLYGNLSHLAPRKRTSPDMQIAVGGCLAQKDRDALLRKAPWVDVVFGTHNIGSLPALLDRARHNRVAQVEIAEALQQFPSSLPSARESAYAAWVSISVGCNNTCTFCIVPSLRGKEIDRSPADILAEVQSLVDTGVVEITLLGQNVNAYGVSFADPALPRNRGAFAELLRACGDIDGLERVRFTSPHPAEFTDDVIEAMAQTPNVCPALHMPLQSGSDRVLRAMRRSYRAERYLGIIERVRAAMPHAAITTDLIVGFPGETEQDFAATLDVVRQARFSAAFTFQYSKRPGTPAAELDGQLPKAVVQERYERLVELQEQISLEGNRAIVGQRVELLVATGEGRKDTLTARMSGRARDGRLVHFRAGDGPVRPGDIVTVEVTDAAPHHLIADGGILAHRRTRAGDAHADGQTVRGIGLGMPGIGRPVVPVAAEATSCGSAGGCGSADGAGSSAGDPQ.

The tract at residues 1–21 (MTSTVAHGAGSAGPADDAEPM) is disordered. The MTTase N-terminal domain maps to 24–140 (RTYQVRTYGC…LPALLDRARH (117 aa)). Positions 33, 69, 103, 177, 181, and 184 each coordinate [4Fe-4S] cluster. One can recognise a Radical SAM core domain in the interval 163-399 (RESAYAAWVS…VELQEQISLE (237 aa)). The TRAM domain maps to 402-470 (RAIVGQRVEL…PHHLIADGGI (69 aa)). A disordered region spans residues 510–532 (TSCGSAGGCGSADGAGSSAGDPQ). Residues 523-532 (GAGSSAGDPQ) show a composition bias toward low complexity.

This sequence belongs to the methylthiotransferase family. MiaB subfamily. In terms of assembly, monomer. Requires [4Fe-4S] cluster as cofactor.

The protein resides in the cytoplasm. It carries out the reaction N(6)-dimethylallyladenosine(37) in tRNA + (sulfur carrier)-SH + AH2 + 2 S-adenosyl-L-methionine = 2-methylsulfanyl-N(6)-dimethylallyladenosine(37) in tRNA + (sulfur carrier)-H + 5'-deoxyadenosine + L-methionine + A + S-adenosyl-L-homocysteine + 2 H(+). Catalyzes the methylthiolation of N6-(dimethylallyl)adenosine (i(6)A), leading to the formation of 2-methylthio-N6-(dimethylallyl)adenosine (ms(2)i(6)A) at position 37 in tRNAs that read codons beginning with uridine. In Mycobacterium marinum (strain ATCC BAA-535 / M), this protein is tRNA-2-methylthio-N(6)-dimethylallyladenosine synthase 2.